A 469-amino-acid polypeptide reads, in one-letter code: Cytosolic beta-glucosidase (469 aa).

Residues Q17, H120, and N164 each coordinate substrate. E165 acts as the Proton donor in catalysis. Y309 contributes to the substrate binding site. E373 acts as the Nucleophile in catalysis. Substrate is bound by residues W417 and 424-425 (EW).

Belongs to the glycosyl hydrolase 1 family. Klotho subfamily. In terms of processing, the N-terminus is blocked. In terms of tissue distribution, present in hepatocytes (at protein level).

It is found in the cytoplasm. Its subcellular location is the cytosol. It carries out the reaction Hydrolysis of terminal, non-reducing beta-D-glucosyl residues with release of beta-D-glucose.. It catalyses the reaction a beta-D-glucosyl-(1&lt;-&gt;1')-N-acylsphing-4-enine + H2O = an N-acylsphing-4-enine + D-glucose. The catalysed reaction is a beta-D-galactosyl-(1&lt;-&gt;1')-N-acylsphing-4-enine + H2O = an N-acylsphing-4-enine + D-galactose. The enzyme catalyses beta-D-glucosyl-(1&lt;-&gt;1)-sphing-4-enine + H2O = sphing-4-enine + D-glucose. It carries out the reaction beta-D-glucosyl-(1&lt;-&gt;1)-N-octadecanoylsphing-4-enine + H2O = N-octadecanoylsphing-4-enine + D-glucose. It catalyses the reaction beta-D-galactosyl-(1&lt;-&gt;1)-sphing-4-enine + H2O = sphing-4-enine + D-galactose. The catalysed reaction is beta-D-galactosyl-(1&lt;-&gt;1')-N-octadecanoylsphing-4-enine + H2O = N-octadecanoylsphing-4-enine + D-galactose. The enzyme catalyses a beta-D-xylosyl-(1&lt;-&gt;1')-N-acylsphing-4-enine + cholesterol = cholesteryl 3-beta-D-xyloside + an N-acylsphing-4-enine. Inhibited by 2,4-dinitrophenyl-2-fluoro-2-deoxy-beta-D-glucopyranoside. In terms of biological role, neutral cytosolic beta-glycosidase with a broad substrate specificity that could play a role in the catabolism of glycosylceramides. Has a significant glucosylceramidase activity in vitro. However, that activity is relatively low and its significance in vivo is not clear. Hydrolyzes galactosylceramide/GalCer, glucosylsphingosine/GlcSph and galactosylsphingosine/GalSph. However, the in vivo relevance of these activities is unclear. It can also hydrolyze a broad variety of dietary glycosides including phytoestrogens, flavonols, flavones, flavanones and cyanogens in vitro and could therefore play a role in the metabolism of xenobiotics. Possesses transxylosylase activity in vitro using xylosylated ceramides/XylCers (such as beta-D-xylosyl-(1&lt;-&gt;1')-N-acylsphing-4-enine) as xylosyl donors and cholesterol as acceptor. Could also play a role in the catabolism of cytosolic sialyl free N-glycans. In Cavia porcellus (Guinea pig), this protein is Cytosolic beta-glucosidase.